The following is a 188-amino-acid chain: Elongation factor P (188 aa).

This sequence belongs to the elongation factor P family.

It localises to the cytoplasm. It participates in protein biosynthesis; polypeptide chain elongation. In terms of biological role, involved in peptide bond synthesis. Stimulates efficient translation and peptide-bond synthesis on native or reconstituted 70S ribosomes in vitro. Probably functions indirectly by altering the affinity of the ribosome for aminoacyl-tRNA, thus increasing their reactivity as acceptors for peptidyl transferase. The chain is Elongation factor P from Exiguobacterium sibiricum (strain DSM 17290 / CCUG 55495 / CIP 109462 / JCM 13490 / 255-15).